We begin with the raw amino-acid sequence, 83 residues long: Exodeoxyribonuclease 7 small subunit (83 aa).

It belongs to the XseB family. In terms of assembly, heterooligomer composed of large and small subunits.

Its subcellular location is the cytoplasm. The enzyme catalyses Exonucleolytic cleavage in either 5'- to 3'- or 3'- to 5'-direction to yield nucleoside 5'-phosphates.. Functionally, bidirectionally degrades single-stranded DNA into large acid-insoluble oligonucleotides, which are then degraded further into small acid-soluble oligonucleotides. The sequence is that of Exodeoxyribonuclease 7 small subunit from Brucella melitensis biotype 1 (strain ATCC 23456 / CCUG 17765 / NCTC 10094 / 16M).